Reading from the N-terminus, the 328-residue chain is Tetraacyldisaccharide 4'-kinase (328 aa).

T55–T62 serves as a coordination point for ATP.

This sequence belongs to the LpxK family.

It catalyses the reaction a lipid A disaccharide + ATP = a lipid IVA + ADP + H(+). It functions in the pathway glycolipid biosynthesis; lipid IV(A) biosynthesis; lipid IV(A) from (3R)-3-hydroxytetradecanoyl-[acyl-carrier-protein] and UDP-N-acetyl-alpha-D-glucosamine: step 6/6. Transfers the gamma-phosphate of ATP to the 4'-position of a tetraacyldisaccharide 1-phosphate intermediate (termed DS-1-P) to form tetraacyldisaccharide 1,4'-bis-phosphate (lipid IVA). This Shigella dysenteriae serotype 1 (strain Sd197) protein is Tetraacyldisaccharide 4'-kinase.